Reading from the N-terminus, the 415-residue chain is 3-isopropylmalate dehydratase large subunit (415 aa).

3 residues coordinate [4Fe-4S] cluster: Cys295, Cys353, and Cys356.

It belongs to the aconitase/IPM isomerase family. LeuC type 2 subfamily. As to quaternary structure, heterodimer of LeuC and LeuD. The cofactor is [4Fe-4S] cluster.

It carries out the reaction (2R,3S)-3-isopropylmalate = (2S)-2-isopropylmalate. The protein operates within amino-acid biosynthesis; L-leucine biosynthesis; L-leucine from 3-methyl-2-oxobutanoate: step 2/4. Catalyzes the isomerization between 2-isopropylmalate and 3-isopropylmalate, via the formation of 2-isopropylmaleate. The protein is 3-isopropylmalate dehydratase large subunit of Pyrobaculum neutrophilum (strain DSM 2338 / JCM 9278 / NBRC 100436 / V24Sta) (Thermoproteus neutrophilus).